The chain runs to 721 residues: 1,4-alpha-glucan branching enzyme GlgB (721 aa).

Catalysis depends on aspartate 404, which acts as the Nucleophile. Catalysis depends on glutamate 457, which acts as the Proton donor.

Belongs to the glycosyl hydrolase 13 family. GlgB subfamily. In terms of assembly, monomer.

It catalyses the reaction Transfers a segment of a (1-&gt;4)-alpha-D-glucan chain to a primary hydroxy group in a similar glucan chain.. It functions in the pathway glycan biosynthesis; glycogen biosynthesis. Its function is as follows. Catalyzes the formation of the alpha-1,6-glucosidic linkages in glycogen by scission of a 1,4-alpha-linked oligosaccharide from growing alpha-1,4-glucan chains and the subsequent attachment of the oligosaccharide to the alpha-1,6 position. In Bradyrhizobium diazoefficiens (strain JCM 10833 / BCRC 13528 / IAM 13628 / NBRC 14792 / USDA 110), this protein is 1,4-alpha-glucan branching enzyme GlgB.